The chain runs to 287 residues: Bifunctional protein FolD 2 (287 aa).

NADP(+) is bound by residues 166-168 and I232; that span reads GAS.

Belongs to the tetrahydrofolate dehydrogenase/cyclohydrolase family. Homodimer.

The catalysed reaction is (6R)-5,10-methylene-5,6,7,8-tetrahydrofolate + NADP(+) = (6R)-5,10-methenyltetrahydrofolate + NADPH. It catalyses the reaction (6R)-5,10-methenyltetrahydrofolate + H2O = (6R)-10-formyltetrahydrofolate + H(+). The protein operates within one-carbon metabolism; tetrahydrofolate interconversion. Its function is as follows. Catalyzes the oxidation of 5,10-methylenetetrahydrofolate to 5,10-methenyltetrahydrofolate and then the hydrolysis of 5,10-methenyltetrahydrofolate to 10-formyltetrahydrofolate. This chain is Bifunctional protein FolD 2, found in Hydrogenovibrio crunogenus (strain DSM 25203 / XCL-2) (Thiomicrospira crunogena).